Here is a 1282-residue protein sequence, read N- to C-terminus: Myosin-1 (1282 aa).

The interval 1-30 (MAISKKAGAKKAGAVSKPPPSKGASSKGGV) is disordered. A Myosin motor domain is found at 44–723 (AGVSDMTLLS…TLFALETMRD (680 aa)). Residue 137–144 (GESGAGKT) participates in ATP binding. Ser-365 is modified (phosphoserine). The tract at residues 412–494 (VIGVLDIYGF…PGIFSALNDA (83 aa)) is actin-binding. The interval 569-590 (LQKLFPDRPDPNSKKRPPTAGD) is disordered. IQ domains lie at 727–747 (HNMA…KEEC) and 748–773 (ARRI…YGHQ). Residues 781–977 (RRRFSLLGLR…AVSVCSGEPA (197 aa)) form the TH1 domain. A disordered region spans residues 973-1073 (SGEPANSVSR…PPPAAVAPSE (101 aa)). The segment covering 1029–1058 (PGSGAAGTARPAAAVGSASAGAGVGATRSA) has biased composition (low complexity). Pro residues predominate over residues 1059 to 1068 (PRPPPPPPAA). Residues 1074–1135 (PQVARYKALY…PSNYLELIVQ (62 aa)) form the SH3 domain. The disordered stretch occupies residues 1237 to 1282 (AAAAAAGAGANGKGAGAPPAVAAKPVVAPKPAGSNGRAMPPPPPRR). The segment covering 1252–1269 (GAPPAVAAKPVVAPKPAG) has biased composition (low complexity).

Belongs to the TRAFAC class myosin-kinesin ATPase superfamily. Myosin family. Phosphorylation of the TEDS site (Ser-365) is required for the polarization of the actin cytoskeleton. Phosphorylation probably activates the myosin-I ATPase activity.

It is found in the cytoplasm. Its subcellular location is the cytoskeleton. The protein resides in the actin patch. Its function is as follows. Type-I myosin implicated in the organization of the actin cytoskeleton. Required for proper actin cytoskeleton polarization. At the cell cortex, assembles in patch-like structures together with proteins from the actin-polymerizing machinery and promotes actin assembly. Functions as actin nucleation-promoting factor (NPF) for the Arp2/3 complex. The polypeptide is Myosin-1 (myo1) (Mycosarcoma maydis (Corn smut fungus)).